The following is a 236-amino-acid chain: Leucyl/phenylalanyl-tRNA--protein transferase (236 aa).

The protein belongs to the L/F-transferase family.

The protein resides in the cytoplasm. It catalyses the reaction N-terminal L-lysyl-[protein] + L-leucyl-tRNA(Leu) = N-terminal L-leucyl-L-lysyl-[protein] + tRNA(Leu) + H(+). It carries out the reaction N-terminal L-arginyl-[protein] + L-leucyl-tRNA(Leu) = N-terminal L-leucyl-L-arginyl-[protein] + tRNA(Leu) + H(+). The catalysed reaction is L-phenylalanyl-tRNA(Phe) + an N-terminal L-alpha-aminoacyl-[protein] = an N-terminal L-phenylalanyl-L-alpha-aminoacyl-[protein] + tRNA(Phe). In terms of biological role, functions in the N-end rule pathway of protein degradation where it conjugates Leu, Phe and, less efficiently, Met from aminoacyl-tRNAs to the N-termini of proteins containing an N-terminal arginine or lysine. In Nitrosomonas europaea (strain ATCC 19718 / CIP 103999 / KCTC 2705 / NBRC 14298), this protein is Leucyl/phenylalanyl-tRNA--protein transferase.